We begin with the raw amino-acid sequence, 548 residues long: Protoporphyrinogen oxidase, chloroplastic (548 aa).

Residues 1-50 (MTTTPIANHPNIFTHQSSSSPLAFLNRTSFIPFSSISKRNSVNCNGWRTR) constitute a chloroplast transit peptide. FAD contacts are provided by residues 78-83 (GAGISG), 101-102 (EA), and 123-126 (GPNS). Residues 265–279 (KERSSTPKAPRDPRL) are compositionally biased toward basic and acidic residues. Positions 265–287 (KERSSTPKAPRDPRLPKPKGQTV) are disordered. 522–524 (VAL) contacts FAD.

Belongs to the protoporphyrinogen/coproporphyrinogen oxidase family. Protoporphyrinogen oxidase subfamily. As to quaternary structure, homodimer. It depends on FAD as a cofactor.

It is found in the plastid. Its subcellular location is the chloroplast. The enzyme catalyses protoporphyrinogen IX + 3 O2 = protoporphyrin IX + 3 H2O2. It participates in porphyrin-containing compound metabolism; protoporphyrin-IX biosynthesis; protoporphyrin-IX from protoporphyrinogen-IX: step 1/1. It functions in the pathway porphyrin-containing compound metabolism; chlorophyll biosynthesis. Catalyzes the 6-electron oxidation of protoporphyrinogen-IX to form protoporphyrin-IX. This Nicotiana tabacum (Common tobacco) protein is Protoporphyrinogen oxidase, chloroplastic (PPXI).